The sequence spans 297 residues: Probable endonuclease 4 (297 aa).

The Zn(2+) site is built by H69, H110, E145, D179, H182, H214, D227, H229, and E259.

This sequence belongs to the AP endonuclease 2 family. The cofactor is Zn(2+).

It carries out the reaction Endonucleolytic cleavage to 5'-phosphooligonucleotide end-products.. Its function is as follows. Endonuclease IV plays a role in DNA repair. It cleaves phosphodiester bonds at apurinic or apyrimidinic (AP) sites, generating a 3'-hydroxyl group and a 5'-terminal sugar phosphate. In Listeria innocua serovar 6a (strain ATCC BAA-680 / CLIP 11262), this protein is Probable endonuclease 4.